The chain runs to 134 residues: Global transcriptional regulator Spx (134 aa).

A disulfide bridge connects residues cysteine 10 and cysteine 13.

It belongs to the ArsC family. Spx subfamily. Interacts with the C-terminal domain of the alpha subunit of the RNAP.

The protein localises to the cytoplasm. Its function is as follows. Global transcriptional regulator that plays a key role in stress response and exerts either positive or negative regulation of genes. Acts by interacting with the C-terminal domain of the alpha subunit of the RNA polymerase (RNAP). This interaction can enhance binding of RNAP to the promoter region of target genes and stimulate their transcription, or block interaction of RNAP with activator. The sequence is that of Global transcriptional regulator Spx from Streptococcus pyogenes serotype M6 (strain ATCC BAA-946 / MGAS10394).